The sequence spans 365 residues: tRNA-specific 2-thiouridylase MnmA (365 aa).

Residues 6–13 (AMSGGVDS) and Met-32 each bind ATP. Cys-101 functions as the Nucleophile in the catalytic mechanism. Cys-101 and Cys-199 form a disulfide bridge. Gly-125 is a binding site for ATP. An interaction with tRNA region spans residues 148-150 (KDQ). The active-site Cysteine persulfide intermediate is Cys-199.

Belongs to the MnmA/TRMU family.

It is found in the cytoplasm. It catalyses the reaction S-sulfanyl-L-cysteinyl-[protein] + uridine(34) in tRNA + AH2 + ATP = 2-thiouridine(34) in tRNA + L-cysteinyl-[protein] + A + AMP + diphosphate + H(+). Catalyzes the 2-thiolation of uridine at the wobble position (U34) of tRNA, leading to the formation of s(2)U34. The sequence is that of tRNA-specific 2-thiouridylase MnmA from Kineococcus radiotolerans (strain ATCC BAA-149 / DSM 14245 / SRS30216).